The primary structure comprises 129 residues: Small ribosomal subunit protein uS9 (129 aa).

The tract at residues 110-129 is disordered; it reads VERKKYGKKKARKSFQFSKR. Residues 114 to 129 show a composition bias toward basic residues; it reads KYGKKKARKSFQFSKR.

Belongs to the universal ribosomal protein uS9 family.

The polypeptide is Small ribosomal subunit protein uS9 (Chlorobaculum parvum (strain DSM 263 / NCIMB 8327) (Chlorobium vibrioforme subsp. thiosulfatophilum)).